The primary structure comprises 428 residues: Chaperone SurA (428 aa).

An N-terminal signal peptide occupies residues 1–20 (MKNWKTLLLGIAMIANTSFA). PpiC domains are found at residues 171 to 272 (STEL…KVND) and 282 to 382 (VTEV…ELLD).

The protein resides in the periplasm. It carries out the reaction [protein]-peptidylproline (omega=180) = [protein]-peptidylproline (omega=0). In terms of biological role, chaperone involved in the correct folding and assembly of outer membrane proteins. Recognizes specific patterns of aromatic residues and the orientation of their side chains, which are found more frequently in integral outer membrane proteins. May act in both early periplasmic and late outer membrane-associated steps of protein maturation. The chain is Chaperone SurA from Salmonella paratyphi A (strain ATCC 9150 / SARB42).